Consider the following 552-residue polypeptide: Cytochrome c oxidase subunit 1 (552 aa).

Residues 35-55 (VIGIQYLVTAFIFYLIGGLMA) form a helical membrane-spanning segment. Residue His82 participates in Fe(II)-heme a binding. Transmembrane regions (helical) follow at residues 85 to 105 (IMIF…YLVP), 120 to 140 (ALAF…FLFG), 164 to 184 (WILA…NFIV), 211 to 231 (LLAL…LFDI), 252 to 272 (LFWF…FGIM), and 284 to 304 (IFGY…GLFV). Cu cation contacts are provided by His258 and Tyr262. The segment at residues 258-262 (HPAVY) is a cross-link (1'-histidyl-3'-tyrosine (His-Tyr)). Residues His307 and His308 each contribute to the Cu cation site. Helical transmembrane passes span 321-341 (FFTI…FSWV), 355-375 (MLFA…GVTL), 390-410 (VVAH…YAGI), 426-446 (LGIL…LPMH), and 470-490 (ICTI…INII). His393 serves as a coordination point for heme a3. Residue His395 coordinates Fe(II)-heme a.

This sequence belongs to the heme-copper respiratory oxidase family. It depends on Cu(2+) as a cofactor. Heme is required as a cofactor.

The protein resides in the cell membrane. The catalysed reaction is 4 Fe(II)-[cytochrome c] + O2 + 8 H(+)(in) = 4 Fe(III)-[cytochrome c] + 2 H2O + 4 H(+)(out). Its pathway is energy metabolism; oxidative phosphorylation. Functionally, cytochrome c oxidase is the component of the respiratory chain that catalyzes the reduction of oxygen to water. Subunits 1-3 form the functional core of the enzyme complex. CO I is the catalytic subunit of the enzyme. Electrons originating in cytochrome c are transferred via the copper A center of subunit 2 and heme A of subunit 1 to the bimetallic center formed by heme A3 and copper B. This chain is Cytochrome c oxidase subunit 1 (ctaD), found in Thermostichus vulcanus (Synechococcus vulcanus).